Reading from the N-terminus, the 431-residue chain is MIDYQEVLSRYRPTQEEENKLKIISDDIIRKINSICRSRGLRAEAVIVGSYAKGTNLRDGDLDIFIAFDRDYPEEIINTEGLHIGHAVIPNGREKYAEHPYVSGEIGGVKIDVVPCYKMSFGDKKISAVDRTLLHTEYVNGHLDEKGRDEVRLLKIFTKSIGVYGAEARTFGFSGYLCELLVIRFGSFENVIRYFSKAKGRVLIDLDERFRDPMVLIDPVDPDRNVASPVSLESLSRMKIASKMFLSSPDEGFFQIEHNGKNVQYHDRGTCIMIYSLPKPDLTDDVIYPQVYRFRSVLQKIMESHEIRVISSEIDVSDRIYVLIETPACAEERIRVHTGPPVDTDNAVDFVNSWKARDRSRGPYIVADRLYVDVFTGQRSIEDIVRQEIFNYSIGKNLDRFKKSMEIMKFNVGMKSLPVLDKFFGADVFRK.

Residues serine 50 and lysine 53 each coordinate ATP. CTP-binding residues include serine 50 and lysine 53. Mg(2+)-binding residues include aspartate 61, aspartate 63, and aspartate 112. Positions 135, 155, and 164 each coordinate ATP. CTP contacts are provided by histidine 135, lysine 155, and tyrosine 164.

It belongs to the tRNA nucleotidyltransferase/poly(A) polymerase family. Archaeal CCA-adding enzyme subfamily. In terms of assembly, homodimer. It depends on Mg(2+) as a cofactor.

It catalyses the reaction a tRNA precursor + 2 CTP + ATP = a tRNA with a 3' CCA end + 3 diphosphate. The enzyme catalyses a tRNA with a 3' CCA end + 2 CTP + ATP = a tRNA with a 3' CCACCA end + 3 diphosphate. In terms of biological role, catalyzes the addition and repair of the essential 3'-terminal CCA sequence in tRNAs without using a nucleic acid template. Adds these three nucleotides in the order of C, C, and A to the tRNA nucleotide-73, using CTP and ATP as substrates and producing inorganic pyrophosphate. tRNA 3'-terminal CCA addition is required both for tRNA processing and repair. Also involved in tRNA surveillance by mediating tandem CCA addition to generate a CCACCA at the 3' terminus of unstable tRNAs. While stable tRNAs receive only 3'-terminal CCA, unstable tRNAs are marked with CCACCA and rapidly degraded. In Thermoplasma acidophilum (strain ATCC 25905 / DSM 1728 / JCM 9062 / NBRC 15155 / AMRC-C165), this protein is CCA-adding enzyme.